The chain runs to 231 residues: Peroxisomal membrane protein 11E (231 aa).

Topologically, residues 1-91 (MTTLDLTRAE…LPLVLLGKSK (91 aa)) are cytoplasmic. Residues 92 to 108 (NALLSTFLFLDQIVWLG) traverse the membrane as a helical segment. At 109–202 (RSGIYKNKER…LLQLAPKTIS (94 aa)) the chain is on the lumenal side. Residues 203–222 (PRVTGAFGFTTSLISCYQLL) traverse the membrane as a helical segment. Residues 223–231 (PSRPKLKTP) are Cytoplasmic-facing.

Belongs to the peroxin-11 family. Homooligomer. Interacts with ARC5 and FIS1B on peroxisomes. As to expression, expressed in leaves and developing siliques.

The protein localises to the peroxisome membrane. Functionally, involved in peroxisomal proliferation. Promotes peroxisomal duplication, aggregation or elongation without fission. In Arabidopsis thaliana (Mouse-ear cress), this protein is Peroxisomal membrane protein 11E (PEX11E).